The following is a 283-amino-acid chain: 2,3,4,5-tetrahydropyridine-2,6-dicarboxylate N-succinyltransferase (283 aa).

2 residues coordinate substrate: Arg-107 and Asp-144.

The protein belongs to the transferase hexapeptide repeat family. As to quaternary structure, homotrimer.

It is found in the cytoplasm. It catalyses the reaction (S)-2,3,4,5-tetrahydrodipicolinate + succinyl-CoA + H2O = (S)-2-succinylamino-6-oxoheptanedioate + CoA. Its pathway is amino-acid biosynthesis; L-lysine biosynthesis via DAP pathway; LL-2,6-diaminopimelate from (S)-tetrahydrodipicolinate (succinylase route): step 1/3. The polypeptide is 2,3,4,5-tetrahydropyridine-2,6-dicarboxylate N-succinyltransferase (Rhodospirillum rubrum (strain ATCC 11170 / ATH 1.1.1 / DSM 467 / LMG 4362 / NCIMB 8255 / S1)).